The following is a 176-amino-acid chain: Alkyl hydroperoxide reductase AhpD (176 aa).

The Proton donor role is filled by Cys131. A disulfide bond links Cys131 and Cys134. The active-site Cysteine sulfenic acid (-SOH) intermediate is the Cys134.

This sequence belongs to the AhpD family.

The enzyme catalyses N(6)-[(R)-dihydrolipoyl]-L-lysyl-[lipoyl-carrier protein] + a hydroperoxide = N(6)-[(R)-lipoyl]-L-lysyl-[lipoyl-carrier protein] + an alcohol + H2O. In terms of biological role, antioxidant protein with alkyl hydroperoxidase activity. Required for the reduction of the AhpC active site cysteine residues and for the regeneration of the AhpC enzyme activity. This is Alkyl hydroperoxide reductase AhpD from Methylobacterium sp. (strain 4-46).